We begin with the raw amino-acid sequence, 337 residues long: GTP 3',8-cyclase (337 aa).

Residues 17–243 (PFQRQYYYLR…HKSHTDGPAK (227 aa)) form the Radical SAM core domain. Arginine 26 serves as a coordination point for GTP. [4Fe-4S] cluster contacts are provided by cysteine 33 and cysteine 37. Tyrosine 39 contacts S-adenosyl-L-methionine. Cysteine 40 is a [4Fe-4S] cluster binding site. Residue arginine 76 coordinates GTP. Position 80 (glycine 80) interacts with S-adenosyl-L-methionine. Residue threonine 107 coordinates GTP. Position 131 (serine 131) interacts with S-adenosyl-L-methionine. Lysine 168 serves as a coordination point for GTP. Methionine 202 provides a ligand contact to S-adenosyl-L-methionine. Positions 265 and 268 each coordinate [4Fe-4S] cluster. 270–272 (RLR) contributes to the GTP binding site. Residue cysteine 282 participates in [4Fe-4S] cluster binding.

It belongs to the radical SAM superfamily. MoaA family. Monomer and homodimer. [4Fe-4S] cluster serves as cofactor.

The enzyme catalyses GTP + AH2 + S-adenosyl-L-methionine = (8S)-3',8-cyclo-7,8-dihydroguanosine 5'-triphosphate + 5'-deoxyadenosine + L-methionine + A + H(+). It participates in cofactor biosynthesis; molybdopterin biosynthesis. Its function is as follows. Catalyzes the cyclization of GTP to (8S)-3',8-cyclo-7,8-dihydroguanosine 5'-triphosphate. The sequence is that of GTP 3',8-cyclase from Haemophilus influenzae (strain 86-028NP).